The sequence spans 121 residues: Large ribosomal subunit protein bL12 (121 aa).

The protein belongs to the bacterial ribosomal protein bL12 family. Homodimer. Part of the ribosomal stalk of the 50S ribosomal subunit. Forms a multimeric L10(L12)X complex, where L10 forms an elongated spine to which 2 to 4 L12 dimers bind in a sequential fashion. Binds GTP-bound translation factors.

Its function is as follows. Forms part of the ribosomal stalk which helps the ribosome interact with GTP-bound translation factors. Is thus essential for accurate translation. The chain is Large ribosomal subunit protein bL12 from Leuconostoc citreum (strain KM20).